Here is a 120-residue protein sequence, read N- to C-terminus: Peptidyl-tRNA hydrolase (120 aa).

It belongs to the PTH2 family.

The protein localises to the cytoplasm. It carries out the reaction an N-acyl-L-alpha-aminoacyl-tRNA + H2O = an N-acyl-L-amino acid + a tRNA + H(+). In terms of biological role, the natural substrate for this enzyme may be peptidyl-tRNAs which drop off the ribosome during protein synthesis. The protein is Peptidyl-tRNA hydrolase of Saccharolobus islandicus (strain Y.N.15.51 / Yellowstone #2) (Sulfolobus islandicus).